Reading from the N-terminus, the 228-residue chain is 7-cyano-7-deazaguanine synthase (228 aa).

11–21 (LSGGLDSATCL) contributes to the ATP binding site. 4 residues coordinate Zn(2+): C191, C201, C204, and C207.

The protein belongs to the QueC family. The cofactor is Zn(2+).

The catalysed reaction is 7-carboxy-7-deazaguanine + NH4(+) + ATP = 7-cyano-7-deazaguanine + ADP + phosphate + H2O + H(+). It participates in purine metabolism; 7-cyano-7-deazaguanine biosynthesis. Functionally, catalyzes the ATP-dependent conversion of 7-carboxy-7-deazaguanine (CDG) to 7-cyano-7-deazaguanine (preQ(0)). In Azoarcus sp. (strain BH72), this protein is 7-cyano-7-deazaguanine synthase.